The chain runs to 215 residues: Adenylate kinase (215 aa).

10 to 15 provides a ligand contact to ATP; sequence GAGKGT. An NMP region spans residues 30–59; that stretch reads STGDMLRAAIKAGTPLGLEAKKIIDEGGLV. AMP contacts are provided by residues Thr31, Arg36, 57-59, 85-88, and Gln92; these read GLV and GFPR. The interval 122-159 is LID; the sequence is GRRVHLASGRTYHVTYNPPKTEGKDDVTGEDLIQRDDD. Residues Arg123 and 132 to 133 each bind ATP; that span reads TY. AMP-binding residues include Arg156 and Arg167. Gln200 contacts ATP.

It belongs to the adenylate kinase family. In terms of assembly, monomer.

Its subcellular location is the cytoplasm. It catalyses the reaction AMP + ATP = 2 ADP. The protein operates within purine metabolism; AMP biosynthesis via salvage pathway; AMP from ADP: step 1/1. Its function is as follows. Catalyzes the reversible transfer of the terminal phosphate group between ATP and AMP. Plays an important role in cellular energy homeostasis and in adenine nucleotide metabolism. The protein is Adenylate kinase of Neisseria gonorrhoeae (strain ATCC 700825 / FA 1090).